A 510-amino-acid polypeptide reads, in one-letter code: MKLAYWMYAGPAHIGTLRVATSFKNVHAIMHAPLGDDYFNVMRSMLERERDFTPVTTSIVDRHVLARGSQEKVVENITRKDKEELPDLILLTPTCTSSILQEDLQNFVDRAAMESKSDVLLADVNHYRVNELQAADRTLEQIVRFYIEKAQKQNNLSTTKTIKPSVNILGMFTLGFHNQHDCRELKILLNQLGITVNEVIPEGGSVLNLKNLPKAWFNIVPYREVGLMTAVYLEKEFQMPYVDITPMGIVQTESFIRQIANVLNSIDKTNSYNFDQYIDQQTIYVSQAAWFARSIDCQNLTNKKAVVFGDATHAVAMTKILVREMGIRVACAGTYCQHDADWFREQVWGFCDEVLITDDHTQVGDMIARIEPSAIFGTQMERHVGKRLDIPCGVISAPVHIQNFPLGYRPFLGYEGTNQIADLVYNSFTLGMEDHLLEIFGGHDSKEVITKSLSTDSELNWTIEATSELNKIPGFVRGKVKRNTEKFARQNKIITISIDVMYAAKESAGA.

Position 36 (aspartate 36) interacts with [4Fe-4S] cluster. Aspartate 296 (proton donor) is an active-site residue. Residue 431 to 432 (GM) participates in substrate binding.

This sequence belongs to the ChlB/BchB/BchZ family. As to quaternary structure, protochlorophyllide reductase is composed of three subunits; ChlL, ChlN and ChlB. Forms a heterotetramer of two ChlB and two ChlN subunits. [4Fe-4S] cluster is required as a cofactor.

Its subcellular location is the plastid. It localises to the chloroplast. The catalysed reaction is chlorophyllide a + oxidized 2[4Fe-4S]-[ferredoxin] + 2 ADP + 2 phosphate = protochlorophyllide a + reduced 2[4Fe-4S]-[ferredoxin] + 2 ATP + 2 H2O. It participates in porphyrin-containing compound metabolism; chlorophyll biosynthesis (light-independent). Functionally, component of the dark-operative protochlorophyllide reductase (DPOR) that uses Mg-ATP and reduced ferredoxin to reduce ring D of protochlorophyllide (Pchlide) to form chlorophyllide a (Chlide). This reaction is light-independent. The NB-protein (ChlN-ChlB) is the catalytic component of the complex. This chain is Light-independent protochlorophyllide reductase subunit B, found in Stigeoclonium helveticum (Green alga).